A 625-amino-acid polypeptide reads, in one-letter code: Threonine--tRNA ligase (625 aa).

The interval M1–R149 is editing domain. Catalytic stretches follow at residues N197–P494 and P198–P494. Residues C291, H342, and H463 each coordinate Zn(2+).

This sequence belongs to the class-II aminoacyl-tRNA synthetase family. In terms of assembly, homodimer. Zn(2+) is required as a cofactor.

Its subcellular location is the cytoplasm. The enzyme catalyses tRNA(Thr) + L-threonine + ATP = L-threonyl-tRNA(Thr) + AMP + diphosphate + H(+). In terms of biological role, catalyzes the attachment of threonine to tRNA(Thr) in a two-step reaction: L-threonine is first activated by ATP to form Thr-AMP and then transferred to the acceptor end of tRNA(Thr). Also edits incorrectly charged L-seryl-tRNA(Thr). This is Threonine--tRNA ligase from Hyperthermus butylicus (strain DSM 5456 / JCM 9403 / PLM1-5).